A 186-amino-acid chain; its full sequence is Protein C (186 aa).

Polar residues predominate over residues 1–15 (MSKTDWNASGLSRPS). The tract at residues 1-45 (MSKTDWNASGLSRPSPSAHWPSRKPWQHGQKYQTTQDRTEPPARK) is disordered.

The protein belongs to the morbillivirus protein C family. As to quaternary structure, interacts with the phosphoprotein (via C-terminus); this interaction allows C to associate with the ribonucleocapsid.

Its subcellular location is the host nucleus. The protein localises to the host cytoplasmic vesicle. In terms of biological role, ribonucleocapsid-associated protein that interacts with the phosphoprotein (P), thereby increasing replication accuracy and processivity of the polymerase complex. In Homo sapiens (Human), this protein is Protein C (P/V/C).